The chain runs to 200 residues: Protein GrpE (200 aa).

This sequence belongs to the GrpE family. Homodimer.

It localises to the cytoplasm. Its function is as follows. Participates actively in the response to hyperosmotic and heat shock by preventing the aggregation of stress-denatured proteins, in association with DnaK and GrpE. It is the nucleotide exchange factor for DnaK and may function as a thermosensor. Unfolded proteins bind initially to DnaJ; upon interaction with the DnaJ-bound protein, DnaK hydrolyzes its bound ATP, resulting in the formation of a stable complex. GrpE releases ADP from DnaK; ATP binding to DnaK triggers the release of the substrate protein, thus completing the reaction cycle. Several rounds of ATP-dependent interactions between DnaJ, DnaK and GrpE are required for fully efficient folding. The protein is Protein GrpE of Geobacter sulfurreducens (strain ATCC 51573 / DSM 12127 / PCA).